Here is a 421-residue protein sequence, read N- to C-terminus: UDP-glucuronic acid decarboxylase 1 (421 aa).

Topologically, residues 1 to 19 (MVRTRIQRLLTGINRRMMK) are cytoplasmic. Residues 20 to 40 (LLIALALIAYVASVWGNFVNM) form a helical membrane-spanning segment. The Lumenal portion of the chain corresponds to 41 to 421 (SKSIQENGEQ…RVKKGRTRHN (381 aa)). NAD(+) is bound by residues glycine 99, phenylalanine 100, valine 101, aspartate 120, asparagine 121, phenylalanine 123, threonine 124, glycine 125, aspartate 145, and valine 146. UDP-alpha-D-glucuronate-binding residues include leucine 150 and tyrosine 151. 2 residues coordinate NAD(+): leucine 160 and serine 162. Lysine 178 contributes to the UDP-alpha-D-glucuronate binding site. Threonine 179 provides a ligand contact to NAD(+). UDP-alpha-D-glucuronate is bound by residues asparagine 186, glycine 189, lysine 192, and arginine 193. The NAD(+) site is built by alanine 201, tyrosine 232, and lysine 236. Tyrosine 232 functions as the Proton acceptor in the catalytic mechanism. 3 residues coordinate UDP-alpha-D-glucuronate: tyrosine 246, glutamine 249, and glutamate 250. NAD(+) is bound by residues threonine 262, histidine 268, and arginine 273. Asparagine 317 and asparagine 386 each carry an N-linked (GlcNAc...) asparagine glycan. A disordered region spans residues 400–421 (ANNQYIPKPKPARVKKGRTRHN). The span at 409–421 (KPARVKKGRTRHN) shows a compositional bias: basic residues.

It belongs to the NAD(P)-dependent epimerase/dehydratase family. UDP-glucuronic acid decarboxylase subfamily. As to quaternary structure, homodimer and homotetramer. The cofactor is NAD(+).

It localises to the golgi apparatus. The protein resides in the golgi stack membrane. It carries out the reaction UDP-alpha-D-glucuronate + H(+) = UDP-alpha-D-xylose + CO2. The protein operates within nucleotide-sugar biosynthesis; UDP-alpha-D-xylose biosynthesis; UDP-alpha-D-xylose from UDP-alpha-D-glucuronate: step 1/1. Catalyzes the NAD-dependent decarboxylation of UDP-glucuronic acid to UDP-xylose. Necessary for the biosynthesis of the core tetrasaccharide in glycosaminoglycan biosynthesis. This Xenopus tropicalis (Western clawed frog) protein is UDP-glucuronic acid decarboxylase 1 (uxs1).